Reading from the N-terminus, the 199-residue chain is Probable nicotinate-nucleotide adenylyltransferase (199 aa).

Belongs to the NadD family.

It carries out the reaction nicotinate beta-D-ribonucleotide + ATP + H(+) = deamido-NAD(+) + diphosphate. It participates in cofactor biosynthesis; NAD(+) biosynthesis; deamido-NAD(+) from nicotinate D-ribonucleotide: step 1/1. Catalyzes the reversible adenylation of nicotinate mononucleotide (NaMN) to nicotinic acid adenine dinucleotide (NaAD). This chain is Probable nicotinate-nucleotide adenylyltransferase, found in Roseiflexus castenholzii (strain DSM 13941 / HLO8).